The chain runs to 136 residues: Small ribosomal subunit protein uS11 (136 aa).

This sequence belongs to the universal ribosomal protein uS11 family. As to quaternary structure, part of the 30S ribosomal subunit. Interacts with proteins S7 and S18. Binds to IF-3.

Located on the platform of the 30S subunit, it bridges several disparate RNA helices of the 16S rRNA. Forms part of the Shine-Dalgarno cleft in the 70S ribosome. This is Small ribosomal subunit protein uS11 from Leptospira borgpetersenii serovar Hardjo-bovis (strain JB197).